The primary structure comprises 97 residues: U6-theraphotoxin-Hhn1a 1 (97 aa).

The signal sequence occupies residues 1–33; the sequence is MLIKQFSRRSKNMKVQILLAFAALFVLAVGSYA. A propeptide spanning residues 34 to 61 is cleaved from the precursor; the sequence is SESKKLDLRDALFSAMFSADYQLNPQER. 3 cysteine pairs are disulfide-bonded: cysteine 63–cysteine 77, cysteine 70–cysteine 82, and cysteine 76–cysteine 89.

The protein belongs to the neurotoxin 10 (Hwtx-1) family. 12 (Hntx-12) subfamily. As to expression, expressed by the venom gland.

It localises to the secreted. In terms of biological role, ion channel inhibitor. This is U6-theraphotoxin-Hhn1a 1 from Cyriopagopus hainanus (Chinese bird spider).